We begin with the raw amino-acid sequence, 112 residues long: T cell receptor alpha variable 9-2 (112 aa).

The signal sequence occupies residues 1–20 (MNYSPGLVSLILLLLGRTRG). Residues 21–112 (DSVTQMEGPV…DSAVYFCALS (92 aa)) form the Ig-like domain. N-linked (GlcNAc...) asparagine glycosylation is present at asparagine 41. A disulfide bond links cysteine 42 and cysteine 109.

Alpha-beta TR is a heterodimer composed of an alpha and beta chain; disulfide-linked. The alpha-beta TR is associated with the transmembrane signaling CD3 coreceptor proteins to form the TR-CD3 (TcR or TCR). The assembly of alpha-beta TR heterodimers with CD3 occurs in the endoplasmic reticulum where a single alpha-beta TR heterodimer associates with one CD3D-CD3E heterodimer, one CD3G-CD3E heterodimer and one CD247 homodimer forming a stable octameric structure. CD3D-CD3E and CD3G-CD3E heterodimers preferentially associate with TR alpha and TR beta chains, respectively. The association of the CD247 homodimer is the last step of TcR assembly in the endoplasmic reticulum and is required for transport to the cell surface.

The protein localises to the cell membrane. Its function is as follows. V region of the variable domain of T cell receptor (TR) alpha chain that participates in the antigen recognition. Alpha-beta T cell receptors are antigen specific receptors which are essential to the immune response and are present on the cell surface of T lymphocytes. Recognize peptide-major histocompatibility (MH) (pMH) complexes that are displayed by antigen presenting cells (APC), a prerequisite for efficient T cell adaptive immunity against pathogens. Binding of alpha-beta TR to pMH complex initiates TR-CD3 clustering on the cell surface and intracellular activation of LCK that phosphorylates the ITAM motifs of CD3G, CD3D, CD3E and CD247 enabling the recruitment of ZAP70. In turn ZAP70 phosphorylates LAT, which recruits numerous signaling molecules to form the LAT signalosome. The LAT signalosome propagates signal branching to three major signaling pathways, the calcium, the mitogen-activated protein kinase (MAPK) kinase and the nuclear factor NF-kappa-B (NF-kB) pathways, leading to the mobilization of transcription factors that are critical for gene expression and essential for T cell growth and differentiation. The T cell repertoire is generated in the thymus, by V-(D)-J rearrangement. This repertoire is then shaped by intrathymic selection events to generate a peripheral T cell pool of self-MH restricted, non-autoaggressive T cells. Post-thymic interaction of alpha-beta TR with the pMH complexes shapes TR structural and functional avidity. The chain is T cell receptor alpha variable 9-2 from Homo sapiens (Human).